The sequence spans 1334 residues: DNA-directed RNA polymerase subunit beta' (1334 aa).

Zn(2+) contacts are provided by C213, C284, C291, and C294. The span at 1299–1308 (SSRGSSRFSR) shows a compositional bias: low complexity. Residues 1299–1334 (SSRGSSRFSRQPISDRWSEADEEGEEDDFEEDYEEE) are disordered. The segment covering 1318 to 1334 (ADEEGEEDDFEEDYEEE) has biased composition (acidic residues).

Belongs to the RNA polymerase beta' chain family. RpoC2 subfamily. As to quaternary structure, in cyanobacteria the RNAP catalytic core is composed of 2 alpha, 1 beta, 1 beta', 1 gamma and 1 omega subunit. When a sigma factor is associated with the core the holoenzyme is formed, which can initiate transcription. Zn(2+) is required as a cofactor.

It catalyses the reaction RNA(n) + a ribonucleoside 5'-triphosphate = RNA(n+1) + diphosphate. Functionally, DNA-dependent RNA polymerase catalyzes the transcription of DNA into RNA using the four ribonucleoside triphosphates as substrates. The sequence is that of DNA-directed RNA polymerase subunit beta' from Microcystis aeruginosa (strain NIES-843 / IAM M-2473).